We begin with the raw amino-acid sequence, 463 residues long: Vacuolar cation/proton exchanger 1 (463 aa).

At A2 the chain carries N-acetylalanine. The Cytoplasmic portion of the chain corresponds to A2 to E68. Positions S25–T33 are required for autoinhibitory regulation. The segment at Y56–F62 is required for interaction with autoinhibitory region. The chain crosses the membrane as a helical span at residues V69–T89. A required for Ca(2+)/H(+) exchange activity region spans residues I87–Q95. Residues Y90–P96 lie on the Extracellular side of the membrane. A helical transmembrane segment spans residues W97–L116. Over T117–T127 the chain is Cytoplasmic. The helical transmembrane segment at L128–A148 threads the bilayer. Residues G137–V172 are cation selection. Over L149–L161 the chain is Extracellular. A helical membrane pass occupies residues L162–I182. The Cytoplasmic segment spans residues A183 to D197. Residues V198–Y218 traverse the membrane as a helical segment. At L219–R238 the chain is on the extracellular side. The helical transmembrane segment at G239–H259 threads the bilayer. Residues R260–A281 lie on the Cytoplasmic side of the membrane. Residues V282–L302 form a helical membrane-spanning segment. Residues S303–S325 are Extracellular-facing. N318 carries N-linked (GlcNAc...) asparagine glycosylation. A helical membrane pass occupies residues I326–F346. Residues G333–V368 form a cation selection region. The Cytoplasmic segment spans residues K347 to S360. The helical transmembrane segment at A361–I381 threads the bilayer. The Extracellular segment spans residues N382–D384. The chain crosses the membrane as a helical span at residues L385 to T405. Topologically, residues L406–S411 are cytoplasmic. A helical membrane pass occupies residues H412 to V432. Residues D433–S463 lie on the Extracellular side of the membrane.

Belongs to the Ca(2+):cation antiporter (CaCA) (TC 2.A.19) family. Cation/proton exchanger (CAX) subfamily. As to quaternary structure, interacts with GRXS14 and CXIP4. As to expression, expressed at low levels in leaves, stems and flowers.

Its subcellular location is the vacuole membrane. Its activity is regulated as follows. Activated by monothiol glutaredoxin GRXS14 and CXIP4. Inhibited by excess of Ca(2+) and Cd(2+), Na(+) and K(+), but not Mn(2+). Functionally, vacuolar cation/proton exchanger (CAX). Translocates Ca(2+) and other metal ions into vacuoles using the proton gradient formed by H(+)-ATPase and H(+)-pyrophosphatase. Involved in ion homeostasis in association with CAX3. May play a role in cold-acclimation response. This is Vacuolar cation/proton exchanger 1 (CAX1) from Arabidopsis thaliana (Mouse-ear cress).